A 396-amino-acid chain; its full sequence is Diels-Alderase mpsD (396 aa).

The protein belongs to the Diels-Alderase family.

The protein operates within secondary metabolite biosynthesis. In terms of biological role, diels-Alderase; part of the gene cluster that mediates the biosynthesis of macrophasetins, 3-decalinoyltetramic acids (DTAs) which feature a tetramate (pyrrolidine-2,4-dione) unit connected to a decalin fragment and that have potent bioactivities. The PKS-NRPS mpsA together with its associated enoylreductase partner mpsG incorporate one unit of acetyl-CoA, seven units of malonyl-CoA, and one unit of L-alanine to assemble the linear tetramic acid intermediate corresponding to the backbone of macrophasetins. Without the Diels-Alderase mpsD, the mpsA/G product can undergo the non-enzymatic intramolecular Diels-Alder (IMDA) reaction to generate both macrophasetin A and macrophasetin B. Catalyzed by mpsD, the linear tetramic acid intermediate is thoroughly converted to macrophasetin A via the endo-IMDA reaction in a regioselective and stereoselective manner. Finally, the cytochrome P450 monooxygenase mpsF catalyzes the hydroxylation at C20 to yield the end product macrophasetin C. The protein is Diels-Alderase mpsD of Macrophomina phaseolina (strain MS6) (Charcoal rot fungus).